A 394-amino-acid chain; its full sequence is Upstream-binding factor 1-like protein 1 (394 aa).

The segment at residues 101-169 (PKRPLTAYLR…DFQKKMRQFK (69 aa)) is a DNA-binding region (HMG box 1). Residues 167–180 (QFKKRHPVSGHPKK) show a composition bias toward basic residues. A disordered region spans residues 167 to 197 (QFKKRHPVSGHPKKSVVPQSHPTKVPTKSQG). Positions 183-197 (VPQSHPTKVPTKSQG) are enriched in polar residues. Positions 225–291 (RKPPMNAYHK…QYRVKLDLWL (67 aa)) form a DNA-binding region, HMG box 2. A disordered region spans residues 305–394 (AKATCGKRKN…SDSSSTDEDD (90 aa)).

The protein localises to the cytoplasm. Its subcellular location is the nucleus. Its function is as follows. Essential for proliferation of the inner cell mass and trophectodermal cells in peri-implantation development. This Mus musculus (Mouse) protein is Upstream-binding factor 1-like protein 1.